Here is a 637-residue protein sequence, read N- to C-terminus: Chaperone protein HtpG (637 aa).

The segment at 1–345 (MSQQETHGFQ…SNDLPLNVSR (345 aa)) is a; substrate-binding. Residues 346 to 562 (EILQDNHITK…EGEMSTQMIK (217 aa)) are b. The c stretch occupies residues 563 to 637 (LMQAAGQPVP…MNQMLLANLK (75 aa)).

This sequence belongs to the heat shock protein 90 family. In terms of assembly, homodimer.

The protein localises to the cytoplasm. In terms of biological role, molecular chaperone. Has ATPase activity. In Shewanella oneidensis (strain ATCC 700550 / JCM 31522 / CIP 106686 / LMG 19005 / NCIMB 14063 / MR-1), this protein is Chaperone protein HtpG.